The primary structure comprises 921 residues: Isoleucine--tRNA ligase 1 (921 aa).

The 'HIGH' region motif lies at 57–67; sequence PYANGDIHMGH. Glutamate 552 contributes to the L-isoleucyl-5'-AMP binding site. The 'KMSKS' region motif lies at 593–597; it reads KMSKS. Residue lysine 596 coordinates ATP. The Zn(2+) site is built by cysteine 888, cysteine 891, cysteine 908, and cysteine 911.

This sequence belongs to the class-I aminoacyl-tRNA synthetase family. IleS type 1 subfamily. Monomer. The cofactor is Zn(2+).

It is found in the cytoplasm. The enzyme catalyses tRNA(Ile) + L-isoleucine + ATP = L-isoleucyl-tRNA(Ile) + AMP + diphosphate. Catalyzes the attachment of isoleucine to tRNA(Ile). As IleRS can inadvertently accommodate and process structurally similar amino acids such as valine, to avoid such errors it has two additional distinct tRNA(Ile)-dependent editing activities. One activity is designated as 'pretransfer' editing and involves the hydrolysis of activated Val-AMP. The other activity is designated 'posttransfer' editing and involves deacylation of mischarged Val-tRNA(Ile). This is Isoleucine--tRNA ligase 1 from Bacillus cereus (strain ATCC 10987 / NRS 248).